The primary structure comprises 156 residues: Ribonuclease 1B pancreatic (156 aa).

A signal peptide spans 1–28 (MALDKSVIPLPLLVVVLLVLGWAQPSLG). Residues Lys-35 and Arg-38 each contribute to the substrate site. His-40 serves as the catalytic Proton acceptor. Cystine bridges form between Cys-54-Cys-112, Cys-68-Cys-123, Cys-86-Cys-138, and Cys-93-Cys-100. Asn-62 is a glycosylation site (N-linked (GlcNAc...) asparagine). Substrate-binding positions include 69–73 (KSVNT), Lys-94, and Arg-113. A glycan (N-linked (GlcNAc...) asparagine) is linked at Asn-116. His-147 functions as the Proton donor in the catalytic mechanism.

Belongs to the pancreatic ribonuclease family. As to quaternary structure, monomer.

Its subcellular location is the secreted. The enzyme catalyses an [RNA] containing cytidine + H2O = an [RNA]-3'-cytidine-3'-phosphate + a 5'-hydroxy-ribonucleotide-3'-[RNA].. It carries out the reaction an [RNA] containing uridine + H2O = an [RNA]-3'-uridine-3'-phosphate + a 5'-hydroxy-ribonucleotide-3'-[RNA].. Its function is as follows. Endonuclease that catalyzes the cleavage of RNA on the 3' side of pyrimidine nucleotides. Compared to RNASE1 it has lost activity towards dsRNA. The polypeptide is Ribonuclease 1B pancreatic (RNASE1B) (Pygathrix nemaeus (Red-shanked douc langur)).